Consider the following 226-residue polypeptide: V-type proton ATPase subunit E 1 (226 aa).

At Ala2 the chain carries N-acetylalanine. Tyr56 carries the post-translational modification Phosphotyrosine.

Belongs to the V-ATPase E subunit family. In terms of assembly, V-ATPase is a heteromultimeric enzyme made up of two complexes: the ATP-hydrolytic V1 complex and the proton translocation V0 complex. The V1 complex consists of three catalytic AB heterodimers that form a heterohexamer, three peripheral stalks each consisting of EG heterodimers, one central rotor including subunits D and F, and the regulatory subunits C and H. The proton translocation complex V0 consists of the proton transport subunit a, a ring of proteolipid subunits c9c'', rotary subunit d, subunits e and f, and the accessory subunits ATP6AP1/Ac45 and ATP6AP2/PRR. Interacts with RABL2/RABL2A; binds preferentially to GTP-bound RABL2. Interacts with ALDOC. Interacts with RAB11B. As to expression, kidney; localizes to early distal nephron, encompassing thick ascending limbs and distal convoluted tubules (at protein level). Ubiquitous. High expression in the skin.

Its subcellular location is the apical cell membrane. The protein localises to the cytoplasmic vesicle. It is found in the secretory vesicle. The protein resides in the synaptic vesicle membrane. It localises to the clathrin-coated vesicle membrane. In terms of biological role, subunit of the V1 complex of vacuolar(H+)-ATPase (V-ATPase), a multisubunit enzyme composed of a peripheral complex (V1) that hydrolyzes ATP and a membrane integral complex (V0) that translocates protons. V-ATPase is responsible for acidifying and maintaining the pH of intracellular compartments and in some cell types, is targeted to the plasma membrane, where it is responsible for acidifying the extracellular environment. This Homo sapiens (Human) protein is V-type proton ATPase subunit E 1 (ATP6V1E1).